A 252-amino-acid polypeptide reads, in one-letter code: Adenylate kinase (252 aa).

Gly-47 to Thr-52 contacts ATP. The NMP stretch occupies residues Ala-67–Val-96. Residues Thr-68, Arg-73, Gly-94–Val-96, Gly-123–Arg-126, and Gln-130 contribute to the AMP site. Residues Gly-164–Asp-201 form an LID region. ATP-binding positions include Arg-165 and Ser-174–Tyr-175. AMP is bound by residues Arg-198 and Arg-209. Gln-237 contributes to the ATP binding site.

The protein belongs to the adenylate kinase family. AK2 subfamily. In terms of assembly, monomer.

The protein resides in the cytoplasm. It is found in the cytosol. The protein localises to the mitochondrion intermembrane space. It catalyses the reaction AMP + ATP = 2 ADP. Functionally, catalyzes the reversible transfer of the terminal phosphate group between ATP and AMP. Plays an important role in cellular energy homeostasis and in adenine nucleotide metabolism. Adenylate kinase activity is critical for regulation of the phosphate utilization and the AMP de novo biosynthesis pathways. The protein is Adenylate kinase of Lodderomyces elongisporus (strain ATCC 11503 / CBS 2605 / JCM 1781 / NBRC 1676 / NRRL YB-4239) (Yeast).